The chain runs to 84 residues: Cytochrome b559 subunit alpha (84 aa).

Residues Ile24 to Phe38 traverse the membrane as a helical segment. Heme is bound at residue His26.

The protein belongs to the PsbE/PsbF family. Heterodimer of an alpha subunit and a beta subunit. PSII is composed of 1 copy each of membrane proteins PsbA, PsbB, PsbC, PsbD, PsbE, PsbF, PsbH, PsbI, PsbJ, PsbK, PsbL, PsbM, PsbT, PsbX, PsbY, Psb30/Ycf12, peripheral proteins PsbO, CyanoQ (PsbQ), PsbU, PsbV and a large number of cofactors. It forms dimeric complexes. The cofactor is heme b.

It is found in the cellular thylakoid membrane. Its function is as follows. This b-type cytochrome is tightly associated with the reaction center of photosystem II (PSII). PSII is a light-driven water:plastoquinone oxidoreductase that uses light energy to abstract electrons from H(2)O, generating O(2) and a proton gradient subsequently used for ATP formation. It consists of a core antenna complex that captures photons, and an electron transfer chain that converts photonic excitation into a charge separation. The protein is Cytochrome b559 subunit alpha of Prochlorococcus marinus (strain MIT 9301).